A 339-amino-acid chain; its full sequence is Purple acid phosphatase 4 (339 aa).

Positions 1 to 31 are cleaved as a signal peptide; the sequence is MSSKFDIGSLSIVMTLLICFLLLSLAPKLEA. Position 53 (aspartate 53) interacts with Fe cation. N-linked (GlcNAc...) asparagine glycosylation occurs at asparagine 61. Fe cation-binding residues include aspartate 86 and tyrosine 89. Aspartate 86 provides a ligand contact to Zn(2+). Zn(2+) contacts are provided by asparagine 124 and histidine 218. Histidine 227 functions as the Proton donor in the catalytic mechanism. Histidine 253 contacts Zn(2+). Position 253–255 (253–255) interacts with substrate; it reads HDH. Histidine 255 serves as a coordination point for Fe cation. Asparagine 284 carries an N-linked (GlcNAc...) asparagine glycan.

It belongs to the metallophosphoesterase superfamily. Purple acid phosphatase family. As to quaternary structure, homodimer. The cofactor is Fe cation. It depends on Zn(2+) as a cofactor. In terms of tissue distribution, expressed in roots, stems, leaves, flowers and siliques.

It localises to the secreted. It carries out the reaction a phosphate monoester + H2O = an alcohol + phosphate. This Arabidopsis thaliana (Mouse-ear cress) protein is Purple acid phosphatase 4 (PAP4).